The following is a 524-amino-acid chain: Protein MGF 505-2R (524 aa).

Belongs to the asfivirus MGF 505 family.

Plays a role in virus cell tropism, and may be required for efficient virus replication in macrophages. This chain is Protein MGF 505-2R, found in Ornithodoros (relapsing fever ticks).